Reading from the N-terminus, the 267-residue chain is Putative glycosyltransferase 63 (267 aa).

The protein belongs to the glycosyltransferase group 1 family. Glycosyltransferase 4 subfamily.

The protein is Putative glycosyltransferase 63 (SIFV0063) of Sulfolobus islandicus filamentous virus (isolate Iceland/Hveragerdi) (SIFV).